The primary structure comprises 114 residues: Tyrosine-protein phosphatase 27 (114 aa).

One can recognise a Tyrosine-protein phosphatase domain in the interval 1–114 (WQMIVEHKCC…ELGNDNPIVV (114 aa)). Asp-82 lines the substrate pocket.

The protein belongs to the protein-tyrosine phosphatase family.

The enzyme catalyses O-phospho-L-tyrosyl-[protein] + H2O = L-tyrosyl-[protein] + phosphate. This chain is Tyrosine-protein phosphatase 27 (STY-27), found in Styela plicata (Wrinkled sea squirt).